Reading from the N-terminus, the 371-residue chain is Chaperone protein DnaJ (371 aa).

The J domain maps to 5–70; the sequence is CYYEILNVSK…SKRSRYDQFG (66 aa). The CR-type zinc finger occupies 127-204; sequence GVEKEITIPR…CYGNGKVKKQ (78 aa). 8 residues coordinate Zn(2+): C140, C143, C156, C159, C178, C181, C192, and C195. CXXCXGXG motif repeat units lie at residues 140–147, 156–163, 178–185, and 192–199; these read CDSCDGTG, CHACHGQG, CPVCNGTG, and CDACYGNG.

The protein belongs to the DnaJ family. As to quaternary structure, homodimer. It depends on Zn(2+) as a cofactor.

The protein localises to the cytoplasm. Participates actively in the response to hyperosmotic and heat shock by preventing the aggregation of stress-denatured proteins and by disaggregating proteins, also in an autonomous, DnaK-independent fashion. Unfolded proteins bind initially to DnaJ; upon interaction with the DnaJ-bound protein, DnaK hydrolyzes its bound ATP, resulting in the formation of a stable complex. GrpE releases ADP from DnaK; ATP binding to DnaK triggers the release of the substrate protein, thus completing the reaction cycle. Several rounds of ATP-dependent interactions between DnaJ, DnaK and GrpE are required for fully efficient folding. Also involved, together with DnaK and GrpE, in the DNA replication of plasmids through activation of initiation proteins. This is Chaperone protein DnaJ from Francisella tularensis subsp. tularensis (strain WY96-3418).